The following is a 511-amino-acid chain: ATP synthase subunit alpha (511 aa).

ATP is bound at residue Gly-169–Thr-176.

It belongs to the ATPase alpha/beta chains family. In terms of assembly, F-type ATPases have 2 components, CF(1) - the catalytic core - and CF(0) - the membrane proton channel. CF(1) has five subunits: alpha(3), beta(3), gamma(1), delta(1), epsilon(1). CF(0) has three main subunits: a(1), b(2) and c(9-12). The alpha and beta chains form an alternating ring which encloses part of the gamma chain. CF(1) is attached to CF(0) by a central stalk formed by the gamma and epsilon chains, while a peripheral stalk is formed by the delta and b chains.

It is found in the cell inner membrane. It carries out the reaction ATP + H2O + 4 H(+)(in) = ADP + phosphate + 5 H(+)(out). Produces ATP from ADP in the presence of a proton gradient across the membrane. The alpha chain is a regulatory subunit. The protein is ATP synthase subunit alpha of Bartonella bacilliformis (strain ATCC 35685 / KC583 / Herrer 020/F12,63).